Consider the following 370-residue polypeptide: Gap junction delta-4 protein (370 aa).

Residues methionine 1–threonine 19 lie on the Cytoplasmic side of the membrane. The helical transmembrane segment at methionine 20 to alanine 40 threads the bilayer. Topologically, residues glycine 41–arginine 76 are extracellular. The chain crosses the membrane as a helical span at residues phenylalanine 77 to leucine 97. The Cytoplasmic portion of the chain corresponds to histidine 98–histidine 146. Residues leucine 147–phenylalanine 167 traverse the membrane as a helical segment. At leucine 168–leucine 196 the chain is on the extracellular side. The helical transmembrane segment at leucine 197–valine 217 threads the bilayer. The Cytoplasmic segment spans residues cysteine 218–valine 370. The interval methionine 224–valine 370 is disordered. Positions alanine 246 to glutamate 260 are enriched in basic and acidic residues. Positions proline 331–serine 346 are enriched in low complexity.

This sequence belongs to the connexin family. Delta-type subfamily. A connexon is composed of a hexamer of connexins. Expressed in pancreas, kidney, skeletal muscle, liver, placenta, and heart.

Its subcellular location is the cell membrane. It is found in the cell junction. It localises to the gap junction. Functionally, one gap junction consists of a cluster of closely packed pairs of transmembrane channels, the connexons, through which materials of low MW diffuse from one cell to a neighboring cell. The sequence is that of Gap junction delta-4 protein (GJD4) from Homo sapiens (Human).